A 100-amino-acid chain; its full sequence is MHLSPREKDKLLVAMAAMVARRRLERGVKLNYPESIALISDYVVEGARDGRSVAELMQAGATVLRREQVMEGIAEMIHEIQVEATFPDGTKLVTVHNPIR.

The protein belongs to the urease gamma subunit family. In terms of assembly, heterotrimer of UreA (gamma), UreB (beta) and UreC (alpha) subunits. Three heterotrimers associate to form the active enzyme.

It is found in the cytoplasm. The catalysed reaction is urea + 2 H2O + H(+) = hydrogencarbonate + 2 NH4(+). It functions in the pathway nitrogen metabolism; urea degradation; CO(2) and NH(3) from urea (urease route): step 1/1. The polypeptide is Urease subunit gamma (Magnetococcus marinus (strain ATCC BAA-1437 / JCM 17883 / MC-1)).